The following is an 85-amino-acid chain: Small ribosomal subunit protein eS21 (85 aa).

Belongs to the eukaryotic ribosomal protein eS21 family. As to quaternary structure, component of the 40S small ribosomal subunit.

The protein localises to the cytoplasm. Its subcellular location is the cytosol. It localises to the rough endoplasmic reticulum. This is Small ribosomal subunit protein eS21 (RPS21) from Branchiostoma belcheri (Amphioxus).